A 329-amino-acid polypeptide reads, in one-letter code: Cytoplasmic phosphatidylinositol transfer protein 1 (329 aa).

Residues 267-329 form a disordered region; it reads SHGGYSSAPS…GNKPSLAKPE (63 aa).

Belongs to the PtdIns transfer protein family. PI transfer class IIB subfamily.

The protein localises to the cytoplasm. It catalyses the reaction a 1,2-diacyl-sn-glycero-3-phospho-(1D-myo-inositol)(in) = a 1,2-diacyl-sn-glycero-3-phospho-(1D-myo-inositol)(out). The enzyme catalyses a 1,2-diacyl-sn-glycero-3-phosphate(in) = a 1,2-diacyl-sn-glycero-3-phosphate(out). Catalyzes the transfer of phosphatidylinositol (PI) and phosphatidic acid (PA) between membranes. Binds PA derived from the phospholipase D signaling pathway and among the cellular PA species, preferably binds to the C16:0/16:1 and C16:1/18:1 PA species. The protein is Cytoplasmic phosphatidylinositol transfer protein 1 (pitpnc1) of Xenopus tropicalis (Western clawed frog).